Reading from the N-terminus, the 379-residue chain is 1-deoxy-D-xylulose 5-phosphate reductoisomerase (379 aa).

Positions 10, 11, 12, 13, 39, and 121 each coordinate NADPH. Lysine 122 is a binding site for 1-deoxy-D-xylulose 5-phosphate. Glutamate 123 is an NADPH binding site. Residue aspartate 147 coordinates Mn(2+). Residues serine 148, glutamate 149, serine 173, and histidine 196 each contribute to the 1-deoxy-D-xylulose 5-phosphate site. Glutamate 149 contributes to the Mn(2+) binding site. Glycine 202 is an NADPH binding site. 1-deoxy-D-xylulose 5-phosphate-binding residues include serine 209, asparagine 214, lysine 215, and glutamate 218. Residue glutamate 218 participates in Mn(2+) binding.

The protein belongs to the DXR family. Requires Mg(2+) as cofactor. Mn(2+) is required as a cofactor.

The catalysed reaction is 2-C-methyl-D-erythritol 4-phosphate + NADP(+) = 1-deoxy-D-xylulose 5-phosphate + NADPH + H(+). It functions in the pathway isoprenoid biosynthesis; isopentenyl diphosphate biosynthesis via DXP pathway; isopentenyl diphosphate from 1-deoxy-D-xylulose 5-phosphate: step 1/6. Its function is as follows. Catalyzes the NADPH-dependent rearrangement and reduction of 1-deoxy-D-xylulose-5-phosphate (DXP) to 2-C-methyl-D-erythritol 4-phosphate (MEP). The protein is 1-deoxy-D-xylulose 5-phosphate reductoisomerase of Chlamydia caviae (strain ATCC VR-813 / DSM 19441 / 03DC25 / GPIC) (Chlamydophila caviae).